The sequence spans 346 residues: L-threonine 3-dehydrogenase (346 aa).

Residue C42 participates in Zn(2+) binding. Active-site charge relay system residues include T44 and H47. Zn(2+) is bound by residues H67, E68, C97, C100, C103, and C111. Residues I179, D199, R204, 266-268, and 291-292 each bind NAD(+); these read LSL and IT.

This sequence belongs to the zinc-containing alcohol dehydrogenase family. Homotetramer. Zn(2+) serves as cofactor.

It is found in the cytoplasm. It catalyses the reaction L-threonine + NAD(+) = (2S)-2-amino-3-oxobutanoate + NADH + H(+). The protein operates within amino-acid degradation; L-threonine degradation via oxydo-reductase pathway; glycine from L-threonine: step 1/2. In terms of biological role, catalyzes the NAD(+)-dependent oxidation of L-threonine to 2-amino-3-ketobutyrate. The chain is L-threonine 3-dehydrogenase from Bacillus licheniformis (strain ATCC 14580 / DSM 13 / JCM 2505 / CCUG 7422 / NBRC 12200 / NCIMB 9375 / NCTC 10341 / NRRL NRS-1264 / Gibson 46).